Reading from the N-terminus, the 61-residue chain is Large ribosomal subunit protein eL37 (61 aa).

Zn(2+) is bound by residues Cys20, Cys23, Cys35, and Cys38. The segment at 20–38 (CPRCGRHSYNIVKGYCAAC) adopts a C4-type zinc-finger fold.

Belongs to the eukaryotic ribosomal protein eL37 family. The cofactor is Zn(2+).

Its function is as follows. Binds to the 23S rRNA. The polypeptide is Large ribosomal subunit protein eL37 (Caldivirga maquilingensis (strain ATCC 700844 / DSM 13496 / JCM 10307 / IC-167)).